Reading from the N-terminus, the 472-residue chain is Cysteine--tRNA ligase (472 aa).

Cysteine 28 contacts Zn(2+). The short motif at 30–40 (PTVYDYTHIGH) is the 'HIGH' region element. Zn(2+) contacts are provided by cysteine 207, histidine 232, and glutamate 236. Positions 264-268 (KMSKS) match the 'KMSKS' region motif. ATP is bound at residue lysine 267.

The protein belongs to the class-I aminoacyl-tRNA synthetase family. The cofactor is Zn(2+).

Its subcellular location is the cytoplasm. It carries out the reaction tRNA(Cys) + L-cysteine + ATP = L-cysteinyl-tRNA(Cys) + AMP + diphosphate. In Aeropyrum pernix (strain ATCC 700893 / DSM 11879 / JCM 9820 / NBRC 100138 / K1), this protein is Cysteine--tRNA ligase (cysS).